Here is a 448-residue protein sequence, read N- to C-terminus: N-succinylarginine dihydrolase (448 aa).

Residues 19–28, asparagine 110, and 137–138 each bind substrate; these read GGLSYGNVAS and HR. The active site involves glutamate 174. Residue arginine 214 coordinates substrate. Histidine 250 is an active-site residue. Positions 252 and 365 each coordinate substrate. Catalysis depends on cysteine 371, which acts as the Nucleophile.

The protein belongs to the succinylarginine dihydrolase family. As to quaternary structure, homodimer.

It catalyses the reaction N(2)-succinyl-L-arginine + 2 H2O + 2 H(+) = N(2)-succinyl-L-ornithine + 2 NH4(+) + CO2. It functions in the pathway amino-acid degradation; L-arginine degradation via AST pathway; L-glutamate and succinate from L-arginine: step 2/5. In terms of biological role, catalyzes the hydrolysis of N(2)-succinylarginine into N(2)-succinylornithine, ammonia and CO(2). The chain is N-succinylarginine dihydrolase from Pseudomonas aeruginosa (strain LESB58).